The following is a 511-amino-acid chain: Histidine ammonia-lyase (511 aa).

Residues 142–144 constitute a cross-link (5-imidazolinone (Ala-Gly)); sequence ASG. A 2,3-didehydroalanine (Ser) modification is found at Ser143.

It belongs to the PAL/histidase family. Contains an active site 4-methylidene-imidazol-5-one (MIO), which is formed autocatalytically by cyclization and dehydration of residues Ala-Ser-Gly.

The protein localises to the cytoplasm. The catalysed reaction is L-histidine = trans-urocanate + NH4(+). It functions in the pathway amino-acid degradation; L-histidine degradation into L-glutamate; N-formimidoyl-L-glutamate from L-histidine: step 1/3. In Caulobacter sp. (strain K31), this protein is Histidine ammonia-lyase.